The primary structure comprises 225 residues: 2-C-methyl-D-erythritol 4-phosphate cytidylyltransferase (225 aa).

It belongs to the IspD/TarI cytidylyltransferase family. IspD subfamily.

It carries out the reaction 2-C-methyl-D-erythritol 4-phosphate + CTP + H(+) = 4-CDP-2-C-methyl-D-erythritol + diphosphate. Its pathway is isoprenoid biosynthesis; isopentenyl diphosphate biosynthesis via DXP pathway; isopentenyl diphosphate from 1-deoxy-D-xylulose 5-phosphate: step 2/6. Its function is as follows. Catalyzes the formation of 4-diphosphocytidyl-2-C-methyl-D-erythritol from CTP and 2-C-methyl-D-erythritol 4-phosphate (MEP). The polypeptide is 2-C-methyl-D-erythritol 4-phosphate cytidylyltransferase (Cereibacter sphaeroides (strain KD131 / KCTC 12085) (Rhodobacter sphaeroides)).